The sequence spans 325 residues: ATP synthase gamma chain (325 aa).

It belongs to the ATPase gamma chain family. As to quaternary structure, F-type ATPases have 2 components, CF(1) - the catalytic core - and CF(0) - the membrane proton channel. CF(1) has five subunits: alpha(3), beta(3), gamma(1), delta(1), epsilon(1). CF(0) has three main subunits: a, b and c.

The protein resides in the cell membrane. Produces ATP from ADP in the presence of a proton gradient across the membrane. The gamma chain is believed to be important in regulating ATPase activity and the flow of protons through the CF(0) complex. This chain is ATP synthase gamma chain, found in Corynebacterium diphtheriae (strain ATCC 700971 / NCTC 13129 / Biotype gravis).